The sequence spans 365 residues: MELPLSQATLRHTLLLLPALLSSGQGELAPQIDGQTWAERALRENEHHAFTCRVAGGSATPRLAWYLDGQLQEATTSRLLSVGGDAFSGGTSTFTVTAQRSQHELNCSLQDPGSGRPANASVILNVQFKPEIAQVGAKYQEAQGPGLLVVLFALVRANPPANVTWIDQDGPVTVNASDFLVLDAQNYPWLTNHTVQLQLRSLAHNLSVVATNDVGVTSASLPAPGLLATRIEVPLLGIVVAGGLALGTLVGFSTLVACLVCRKEKKTKGPSRRPSLISSDSNNLKLNNVRLPRENMSLPSNLQLNDLTPDLRGKATERPMAQHSSRPELLEAEPGGLLTSRGFIRLPMLGYIYRVSSVSSDEIWL.

The signal sequence occupies residues 1–26 (MELPLSQATLRHTLLLLPALLSSGQG). Topologically, residues 27–232 (ELAPQIDGQT…APGLLATRIE (206 aa)) are extracellular. The 94-residue stretch at 30 to 123 (PQIDGQTWAE…SGRPANASVI (94 aa)) folds into the Ig-like domain. Cys52 and Cys107 form a disulfide bridge. N-linked (GlcNAc...) asparagine glycosylation is found at Asn106, Asn162, Asn192, and Asn205. A helical transmembrane segment spans residues 233-253 (VPLLGIVVAGGLALGTLVGFS). At 254-365 (TLVACLVCRK…SSVSSDEIWL (112 aa)) the chain is on the cytoplasmic side.

Interacts with GRIN2B. Expressed throughout the brain with higher levels within the hippocampus.

The protein resides in the late endosome. Its subcellular location is the lysosome. It localises to the cell membrane. It is found in the secreted. In terms of biological role, in neurons, modulates the degradation of NMDA receptor GRIN2B subunit. Plays a role in the regulation of neuronal excitability. The chain is Transmembrane protein 25 from Mus musculus (Mouse).